Here is a 1203-residue protein sequence, read N- to C-terminus: Plasma membrane calcium-transporting ATPase 4 (1203 aa).

Residues 1 to 92 (MTNPSGHNLP…NMIPPKKPKT (92 aa)) are Cytoplasmic-facing. Serine 13 carries the post-translational modification Phosphoserine. A helical transmembrane segment spans residues 93-113 (FLELVWEALQDVTLIILEIAA). Over 114–150 (IISLVLSFYRPPGGENEICGHIVSNPEEDEEGETGWI) the chain is Extracellular. Residues 151–171 (EGAAILASVIIVVFVTAFNDW) traverse the membrane as a helical segment. The Cytoplasmic portion of the chain corresponds to 172-356 (SKEKQFRGLQ…KEKSVLQGKL (185 aa)). Positions 294–319 (DDEKKKKGKKQGVSENRNKAKTQDGV) are disordered. Phosphoserine occurs at positions 328 and 334. A disordered region spans residues 330-349 (EGLDSEEKEKKASKGPKKEK). The span at 334–349 (SEEKEKKASKGPKKEK) shows a compositional bias: basic and acidic residues. The helical transmembrane segment at 357–376 (TRLAVQIGKAGLIMSILTVL) threads the bilayer. The Extracellular portion of the chain corresponds to 377-409 (ILILYFVVDNFVIQRRAWLPECTPVYIQYFVKF). The helical transmembrane segment at 410 to 427 (FIIGVTVLVVAVPEGLPL) threads the bilayer. The Cytoplasmic segment spans residues 428–840 (AVTISLAYSV…MWGRNVYDSI (413 aa)). The active-site 4-aspartylphosphate intermediate is aspartate 465. Aspartate 785 and aspartate 789 together coordinate Mg(2+). A helical membrane pass occupies residues 841–860 (SKFLQFQLTVNVVAVIVAFS). Over 861-870 (GACITQDSPL) the chain is Extracellular. The chain crosses the membrane as a helical span at residues 871-891 (KAVQMLWVNLIMDTFASLALA). Over 892-911 (TEPPTDSLLRRRPYGRNKPL) the chain is Cytoplasmic. The chain crosses the membrane as a helical span at residues 912 to 934 (ISRTMMKNILGHAVYQLGIVFLL). The Extracellular portion of the chain corresponds to 935 to 952 (VFAGDKLFDIDSGRKAPL). The chain crosses the membrane as a helical span at residues 953–974 (NSPPSQHYTIVFNTFVLMQLFN). Residues 975–993 (EINSRKIHGEKNVFAGVYR) lie on the Cytoplasmic side of the membrane. Residues 994–1015 (NIIFCSVVLGTFFCQILIVEVG) form a helical membrane-spanning segment. Residues 1016-1025 (GKPFSCTNLT) are Extracellular-facing. The chain crosses the membrane as a helical span at residues 1026–1047 (MEQWMWCLFIGIGELLWGQVIS). Topologically, residues 1048-1203 (AIPTKSLKFL…SPLQSQETPV (156 aa)) are cytoplasmic. Serine 1064 and serine 1070 each carry phosphoserine. Residues 1086-1103 (LRRGQILWVRGLNRIQTQ) are calmodulin-binding subdomain A. At threonine 1102 the chain carries Phosphothreonine; by PKC. Phosphoserine is present on glutamine 1103. The calmodulin-binding subdomain B stretch occupies residues 1104 to 1113 (IRVVKVFHSF). Residues arginine 1114, aspartate 1115, isoleucine 1126, and serine 1144 each carry the phosphoserine modification.

This sequence belongs to the cation transport ATPase (P-type) (TC 3.A.3) family. Type IIB subfamily. In terms of assembly, interacts with PDZD11. Interacts with SLC35G1 and STIM1. Interacts with calmodulin. In terms of tissue distribution, ubiquitously expressed. Not detected in liver. The highest levels are found in uterus and stomach. Isoform XA is found in uterus, brain, stomach, small intestine, colon and pancreas. Isoform XB is found in uterus, skeletal muscle, lung, kidney, spleen, stomach, small intestine and pancreas. Isoform ZA is found in testis and isoform ZB is found in testis and heart.

It localises to the cell membrane. The protein resides in the cell projection. It is found in the cilium. Its subcellular location is the flagellum membrane. It carries out the reaction Ca(2+)(in) + ATP + H2O = Ca(2+)(out) + ADP + phosphate + H(+). With respect to regulation, activated by calcium/calmodulin. In terms of biological role, calcium/calmodulin-regulated and magnesium-dependent enzyme that catalyzes the hydrolysis of ATP coupled with the transport of calcium out of the cell. By regulating sperm cell calcium homeostasis, may play a role in sperm motility. This chain is Plasma membrane calcium-transporting ATPase 4, found in Rattus norvegicus (Rat).